We begin with the raw amino-acid sequence, 401 residues long: Subtilisin-like protease 7 (401 aa).

The first 20 residues, 1–20 (MGFITKAIPLALAAASVING), serve as a signal peptide directing secretion. Residues 21 to 119 (AEILETRAGV…IERDARVQIN (99 aa)) constitute a propeptide that is removed on maturation. One can recognise an Inhibitor I9 domain in the interval 36 to 118 (KYIVVMNDGM…YIERDARVQI (83 aa)). N-linked (GlcNAc...) asparagine glycosylation occurs at asparagine 58. One can recognise a Peptidase S8 domain in the interval 129–401 (SWGLARVGSR…SKLINNGSGM (273 aa)). Catalysis depends on charge relay system residues aspartate 161 and histidine 193. N-linked (GlcNAc...) asparagine glycans are attached at residues asparagine 223 and asparagine 253. Serine 347 functions as the Charge relay system in the catalytic mechanism. Asparagine 397 is a glycosylation site (N-linked (GlcNAc...) asparagine).

It belongs to the peptidase S8 family.

It is found in the secreted. In terms of biological role, secreted subtilisin-like serine protease with keratinolytic activity that contributes to pathogenicity. This is Subtilisin-like protease 7 (SUB7) from Trichophyton tonsurans (Scalp ringworm fungus).